Reading from the N-terminus, the 2049-residue chain is Polyglutamine-repeat protein pqn-41 (2049 aa).

A disordered region spans residues 1-58 (MKPKKLQQGSDSAHTSDTESTKTCEKTAKKLPKTQKKLQKSKKTAKKRRDEEFRIFFP). Residues 1–1601 (MKPKKLQQGS…TTSQHQQSIQ (1601 aa)) are sufficient to prevent linker cell death. The segment covering 14-28 (HTSDTESTKTCEKTA) has biased composition (basic and acidic residues). Residues 29-47 (KKLPKTQKKLQKSKKTAKK) are compositionally biased toward basic residues. 2 coiled-coil regions span residues 264–302 (RRQEKAENLRIFQEKQKRLQEQQEDAEWEQIEAQRANSD) and 396–432 (TNAGEYEEQEIELERRRLEEEERDQNDKKLEIEDRNH). Residues 459-492 (RGRNSTENSDSESSSEASEPPDDVITKEEPTDFS) form a disordered region. Residues 463–476 (STENSDSESSSEAS) are compositionally biased toward low complexity. Coiled-coil stretches lie at residues 686–730 (ESFE…SFET), 756–796 (ISAD…REFS), and 822–880 (QSSI…ARKL). Residues 1134-1150 (QQQHNHQNFQQQQQGNH) are compositionally biased toward low complexity. 4 disordered regions span residues 1134-1198 (QQQH…ENAA), 1236-1265 (AAAAKRPASETPPNGLPKVPRHDEQQQQQN), 1481-1616 (YKQS…GAAY), and 1636-1661 (ATPKPPVVRPPSAATQQQPVSVTSQA). Basic residues predominate over residues 1162–1171 (QKRKYTKRKA). The segment covering 1176-1194 (AVASSSDQNGMKSPGSSAM) has biased composition (polar residues). Low complexity predominate over residues 1495–1533 (STSSSSAAPASAPAPRAGAGAGATSSSAASSSTSTPSSS). A compositionally biased stretch (basic residues) spans 1534–1546 (SHHKKSSPPHHQK). Composition is skewed to low complexity over residues 1569-1604 (SAPIVGAPRQGATPQAAPATTPATTSQHQQSIQFSQ) and 1649-1661 (ATQQQPVSVTSQA). Coiled-coil stretches lie at residues 1659-1685 (SQASQQQQQFQQIQQQRAAAIAAAAAA) and 1725-1801 (QQYL…LQNI). The interval 1836–1858 (AQAQQAPPTSQPSQAATPQQQQQ) is disordered. Coiled coils occupy residues 1863 to 1961 (RQME…AAAA) and 1991 to 2041 (SAQQ…AQQK).

As to expression, expressed in the linker cell just before it dies.

It is found in the cytoplasm. In males, required for non-apoptotic death of the linker cell once it has finished guiding gonad elongation at the end of larval development. May be involved in nuclear envelope crenellation in the linker cell. Its function is as follows. In males, promotes linker cell survival. In Caenorhabditis elegans, this protein is Polyglutamine-repeat protein pqn-41.